Here is a 307-residue protein sequence, read N- to C-terminus: UDP-N-acetylenolpyruvoylglucosamine reductase (307 aa).

The region spanning 34 to 197 (VGGNAEALFR…LSASLKGRPG (164 aa)) is the FAD-binding PCMH-type domain. Residue arginine 177 is part of the active site. Residue serine 226 is the Proton donor of the active site. The active site involves glutamate 296.

The protein belongs to the MurB family. FAD serves as cofactor.

The protein localises to the cytoplasm. The catalysed reaction is UDP-N-acetyl-alpha-D-muramate + NADP(+) = UDP-N-acetyl-3-O-(1-carboxyvinyl)-alpha-D-glucosamine + NADPH + H(+). It functions in the pathway cell wall biogenesis; peptidoglycan biosynthesis. In terms of biological role, cell wall formation. The sequence is that of UDP-N-acetylenolpyruvoylglucosamine reductase from Paramagnetospirillum magneticum (strain ATCC 700264 / AMB-1) (Magnetospirillum magneticum).